A 620-amino-acid chain; its full sequence is Mitochondrial Rho GTPase 2 (620 aa).

Topologically, residues 1–594 (MKRDVRILLL…ELHTTSFWLR (594 aa)) are cytoplasmic. The region spanning 2–168 (KRDVRILLLG…FYYAQKAVLH (167 aa)) is the Miro 1 domain. Residues Gly16, Lys17, Thr18, and Ser19 each contribute to the GTP site. A Mg(2+)-binding site is contributed by Thr18. Mg(2+)-binding residues include Pro35 and Asp57. GTP is bound at residue Ser59. Lys96 participates in a covalent cross-link: Glycyl lysine isopeptide (Lys-Gly) (interchain with G-Cter in ubiquitin). Residues Asn118, Lys119, Asp121, Ala149, and Lys150 each contribute to the GTP site. Residue Lys119 forms a Glycyl lysine isopeptide (Lys-Gly) (interchain with G-Cter in ubiquitin) linkage. Residue Lys164 forms a Glycyl lysine isopeptide (Lys-Gly) (interchain with G-Cter in ubiquitin) linkage. EF-hand domains follow at residues 184-219 (ACAQALTRIFRLSDQDMDQALSDQELNAFQTCCFGH) and 304-339 (HGYQFAQRMLEKHDQDRDGALSPAELESLFSVFPGP). Ca(2+) is bound by residues Asp197, Asp199, Asp201, Glu208, Asp317, Asp319, Asp321, and Glu328. Residues 340 to 364 (PWGPQLPRHRPHRGRSAAPARVPLP) are disordered. One can recognise a Miro 2 domain in the interval 415–578 (RNVLLCKVLG…FARLATMATF (164 aa)). Positions 427, 429, 430, and 431 each coordinate GTP. Mg(2+) is bound by residues Ser431 and Glu473. 3 residues coordinate GTP: Lys527, Asp529, and Cys558. A helical; Anchor for type IV membrane protein membrane pass occupies residues 595-617 (VALGAVGAAVAAILSFSLYRVLV). At 618–620 (KSR) the chain is on the mitochondrial intermembrane side.

The protein belongs to the mitochondrial Rho GTPase family. Homodimer. Interacts with the kinesin-binding proteins TRAK1/OIP106 and TRAK2/GRIF1, forming a link between mitochondria and the trafficking apparatus of the microtubules. Interacts with ARMCX3. Found in a complex with KIF5B, OGT, RHOT1 and TRAK1. Ubiquitinated by PRKN in a PINK1-dependent manner, leading to its degradation.

The protein resides in the mitochondrion outer membrane. It catalyses the reaction GTP + H2O = GDP + phosphate + H(+). It carries out the reaction ATP + H2O = ADP + phosphate + H(+). The catalysed reaction is UTP + H2O = UDP + phosphate + H(+). Its function is as follows. Atypical mitochondrial nucleoside-triphosphatase (NTPase) involved in mitochondrial trafficking. Probably involved in control of anterograde transport of mitochondria and their subcellular distribution. Can hydrolyze GTP, ATP and UTP. This Sus scrofa (Pig) protein is Mitochondrial Rho GTPase 2 (RHOT2).